Consider the following 105-residue polypeptide: Heat shock protein HspQ (105 aa).

The protein belongs to the HspQ family.

The protein localises to the cytoplasm. Involved in the degradation of certain denaturated proteins, including DnaA, during heat shock stress. The polypeptide is Heat shock protein HspQ (Klebsiella pneumoniae (strain 342)).